The following is a 305-amino-acid chain: Glutaminase (305 aa).

7 residues coordinate substrate: S61, N113, E158, N165, Y189, Y241, and V259.

It belongs to the glutaminase family. As to quaternary structure, homotetramer.

It carries out the reaction L-glutamine + H2O = L-glutamate + NH4(+). This is Glutaminase from Clostridium botulinum (strain Kyoto / Type A2).